The chain runs to 195 residues: uncharacterized protein (195 aa).

Positions 6–66 (VESRKRLLKA…ELITDFHSRV (61 aa)) constitute an HTH tetR-type domain. Positions 29 to 48 (KVSEIVKKAGFTQPSFYLYF) form a DNA-binding region, H-T-H motif.

This is an uncharacterized protein from Bacillus subtilis (strain 168).